A 108-amino-acid chain; its full sequence is Thiosulfate sulfurtransferase GlpE (108 aa).

The 89-residue stretch at Arg17 to Ala105 folds into the Rhodanese domain. Catalysis depends on Cys65, which acts as the Cysteine persulfide intermediate.

This sequence belongs to the GlpE family.

It is found in the cytoplasm. It catalyses the reaction thiosulfate + hydrogen cyanide = thiocyanate + sulfite + 2 H(+). The catalysed reaction is thiosulfate + [thioredoxin]-dithiol = [thioredoxin]-disulfide + hydrogen sulfide + sulfite + 2 H(+). In terms of biological role, transferase that catalyzes the transfer of sulfur from thiosulfate to thiophilic acceptors such as cyanide or dithiols. May function in a CysM-independent thiosulfate assimilation pathway by catalyzing the conversion of thiosulfate to sulfite, which can then be used for L-cysteine biosynthesis. The protein is Thiosulfate sulfurtransferase GlpE of Salmonella agona (strain SL483).